The following is a 432-amino-acid chain: MADVTFDYRNLLEVEGGLTGRELEEISPRLRAAVGTLLEDPPGFMRLPRTREHLEASLEVAERVRSDGATDFVHVGIGGSALGPMVLHRALSHPFYNLLPDRGGPRLHFAENADPATLSGILDVIEPEGTWVNVVTKSGSTAETMANFLVIRGALAEALGDFGYQARTVVTTDPEKGFLKRIADREDLVTLQVPPEVGGRFSVLSPVGLLPAAVAGLDVEALLAGAARCVEELEEQGAEHPAVVGAAMHHLMDASRGRNIRVMMVYADALERLAAWFVQLWAESLGKDGKGSTPHGAVGTTDQHSQLQLYMEGPQDKVIEIVEVREHPRDVGIPGAYEDLEGVGYLSGHTVGELLNVECDATRRALTGAGRPNATIRLGSLSAENLGYLMQALEVQTAVAGALYGVNPYDQPGVEAGKRITYARMGRPGYRA.

The active-site Proton donor is E283. Catalysis depends on residues H304 and K418.

The protein belongs to the GPI family.

The protein resides in the cytoplasm. The enzyme catalyses alpha-D-glucose 6-phosphate = beta-D-fructose 6-phosphate. The protein operates within carbohydrate biosynthesis; gluconeogenesis. It functions in the pathway carbohydrate degradation; glycolysis; D-glyceraldehyde 3-phosphate and glycerone phosphate from D-glucose: step 2/4. Functionally, catalyzes the reversible isomerization of glucose-6-phosphate to fructose-6-phosphate. This chain is Glucose-6-phosphate isomerase, found in Rubrobacter xylanophilus (strain DSM 9941 / JCM 11954 / NBRC 16129 / PRD-1).